A 309-amino-acid polypeptide reads, in one-letter code: Foldase protein PrsA (309 aa).

The N-terminal stretch at 1 to 22 is a signal peptide; the sequence is MKTRSKLAAGFLTLMSVATLAA. Cys-23 carries the N-palmitoyl cysteine lipid modification. A lipid anchor (S-diacylglycerol cysteine) is attached at Cys-23. In terms of domain architecture, PpiC spans 146–241; sequence TPETSVQVIK…TSYYIIKVTD (96 aa).

This sequence belongs to the PrsA family.

The protein resides in the cell membrane. It carries out the reaction [protein]-peptidylproline (omega=180) = [protein]-peptidylproline (omega=0). Its function is as follows. Plays a major role in protein secretion by helping the post-translocational extracellular folding of several secreted proteins. This Streptococcus agalactiae serotype Ia (strain ATCC 27591 / A909 / CDC SS700) protein is Foldase protein PrsA.